A 663-amino-acid polypeptide reads, in one-letter code: Polyunsaturated fatty acid lipoxygenase ALOX12 (663 aa).

The 113-residue stretch at 2–114 (GRYRIRVATG…ILSLPEGTAR (113 aa)) folds into the PLAT domain. Positions 115–663 (LPGDNALDMF…PSCIENSVTI (549 aa)) constitute a Lipoxygenase domain. Serine 246 is modified (phosphoserine). The Fe cation site is built by histidine 360, histidine 365, histidine 540, asparagine 544, and isoleucine 663.

Belongs to the lipoxygenase family. Fe cation serves as cofactor. As to expression, expressed in vascular smooth muscle cells.

It localises to the cytoplasm. Its subcellular location is the cytosol. The protein localises to the membrane. The enzyme catalyses (5Z,8Z,11Z,14Z)-eicosatetraenoate + O2 = (12S)-hydroperoxy-(5Z,8Z,10E,14Z)-eicosatetraenoate. It catalyses the reaction (5Z,8Z,11Z,14Z)-eicosatetraenoate + O2 = (15S)-hydroperoxy-(5Z,8Z,11Z,13E)-eicosatetraenoate. The catalysed reaction is 2 leukotriene A4 + O2 + 2 H2O = 2 lipoxin A4. It carries out the reaction 2 leukotriene A4 + O2 + 2 H2O = 2 lipoxin B4. The enzyme catalyses (14S)-hydroperoxy-(4Z,7Z,10Z,12E,16Z,19Z)-docosahexaenoate = (13S,14S)-epoxy-(4Z,7Z,9E,11E,16Z,19Z)-docosahexaenoate + H2O. It catalyses the reaction N-(5Z,8Z,11Z,14Z)-eicosatetraenoyl-L-alanine + O2 = N-(15S)-hydroperoxy-(5Z,8Z,11Z,13E)-eicosatetraenoyl-alanine. The catalysed reaction is N-(5Z,8Z,11Z,14Z)-eicosatetraenoyl-L-alanine + O2 = N-(12S)-hydroperoxy-(5Z,8Z,10E,14Z)-eicosatetraenoyl-alanine. It carries out the reaction N-(5Z,8Z,11Z,14Z)-eicosatetraenoyl-gamma-aminobutanoate + O2 = N-(15S)-hydroperoxy-(5Z,8Z,11Z,13E)-eicosatetraenoyl-gamma-aminobutanoate. The enzyme catalyses N-(5Z,8Z,11Z,14Z)-eicosatetraenoyl-gamma-aminobutanoate + O2 = N-(12S)-hydroperoxy-(5Z,8Z,10E,14Z)-eicosatetraenoyl-gamma-aminobutanoate. It catalyses the reaction N-(5Z,8Z,11Z,14Z)-eicosatetraenoyl-glycine + O2 = N-(15S)-hydroperoxy-(5Z,8Z,11Z,13E)-eicosatetraenoyl-glycine. The catalysed reaction is N-(5Z,8Z,11Z,14Z)-eicosatetraenoyl-glycine + O2 = N-(12S)-hydroperoxy-(5Z,8Z,10E,14Z)-eicosatetraenoyl-glycine. It carries out the reaction N-(5Z,8Z,11Z,14Z)-eicosatetraenoyl-taurine + O2 = N-(12S)-hydroperoxy-(5Z,8Z,10E,14Z)-eicosatetraenoyl-taurine. The enzyme catalyses N-(5Z,8Z,11Z,14Z)-eicosatetraenoyl-taurine + O2 = N-(15S)-hydroperoxy-(5Z,8Z,11Z,13E)-eicosatetraenoyl-taurine. It catalyses the reaction (4Z,7Z,10Z,13Z,16Z,19Z)-docosahexaenoate + O2 = (14S)-hydroperoxy-(4Z,7Z,10Z,12E,16Z,19Z)-docosahexaenoate. The catalysed reaction is (7S)-hydroperoxy-(4Z,8E,10Z,13Z,16Z,19Z)-docosahexaenoate + O2 = (7S,14S)-dihydroperoxy-(4Z,8E,10Z,12E,16Z,19Z)-docosahexaenoate. It carries out the reaction (7S)-hydroperoxy-(4Z,8E,10Z,13Z,16Z,19Z)-docosahexaenoate + O2 = (7S,17S)-dihydroperoxy-(4Z,8E,10Z,13Z,15E,19Z)-docosahexaenoate. The enzyme catalyses (5Z,8Z,11Z,14Z,17Z)-eicosapentaenoate + O2 = (12S)-hydroperoxy-(5Z,8Z,10E,14Z,17Z)-eicosapentaenoate. It catalyses the reaction (8Z,11Z,14Z)-eicosatrienoate + O2 = (12S)-hydroperoxy-(8Z,10E,14Z)-eicosatrienoate. The catalysed reaction is (9Z,12Z)-octadecadienoate + O2 = (13S)-hydroperoxy-(9Z,11E)-octadecadienoate. It carries out the reaction (5Z,8Z,11Z)-eicosatrienoate + O2 = (12S)-hydroperoxy-(5Z,8Z,10E)-eicosatrienoate. The enzyme catalyses (14R,15S)-epoxy-(5Z,8Z,11Z)-eicosatrienoate + O2 = (12S)-hydroperoxy-(14R,15S)-epoxy-(5Z,8Z,10E)-eicosatrienoate. It catalyses the reaction (14S,15R)-epoxy-(5Z,8Z,11Z)-eicosatrienoate + O2 = (12S)-hydroperoxy-(14S,15R)-epoxy-(5Z,8Z,10E)-eicosatrienoate. The protein operates within lipid metabolism; hydroperoxy eicosatetraenoic acid biosynthesis. Its activity is regulated as follows. Activated by EGF. Arachidonic acid conversion is inhibited by (13S,14S)-epoxy-(4Z,7Z,9E,11E,16Z,19Z)-docosahexaenoate (13S,14S-epoxy-DHA). Arachidonate 12-lipoxygenase activity is decreased when PH decreases from 7.4 to 6. Catalyzes the regio and stereo-specific incorporation of molecular oxygen into free and esterified polyunsaturated fatty acids generating lipid hydroperoxides that can be further reduced to the corresponding hydroxy species. Mainly converts arachidonate ((5Z,8Z,11Z,14Z)-eicosatetraenoate) to the specific bioactive lipid (12S)-hydroperoxyeicosatetraenoate/(12S)-HPETE. Through the production of bioactive lipids like (12S)-HPETE it regulates different biological processes including platelet activation. It can also catalyze the epoxidation of double bonds of polyunsaturated fatty acids such as (14S)-hydroperoxy-docosahexaenoate/(14S)-HPDHA resulting in the formation of (13S,14S)-epoxy-DHA. Furthermore, it may participate in the sequential oxidations of DHA ((4Z,7Z,10Z,13Z,16Z,19Z)-docosahexaenoate) to generate specialized pro-resolving mediators (SPMs) like resolvin D5 ((7S,17S)-diHPDHA) and (7S,14S)-diHPDHA, that actively down-regulate the immune response and have anti-aggregation properties with platelets. An additional function involves a multistep process by which it transforms leukotriene A4/LTA4 into the bioactive lipids lipoxin A4/LXA4 and lipoxin B4/LXB4, both are vasoactive and LXA4 may regulate neutrophil function via occupancy of specific recognition sites. Can also peroxidize linoleate ((9Z,12Z)-octadecadienoate) to (13S)-hydroperoxyoctadecadienoate/ (13S-HPODE). Due to its role in regulating both the expression of the vascular endothelial growth factor (VEGF, an angiogenic factor involved in the survival and metastasis of solid tumors) and the expression of integrin beta-1 (known to affect tumor cell migration and proliferation), it can be regarded as protumorigenic. Important for cell survival, as it may play a role not only in proliferation but also in the prevention of apoptosis in vascular smooth muscle cells. This Homo sapiens (Human) protein is Polyunsaturated fatty acid lipoxygenase ALOX12.